The following is a 751-amino-acid chain: Putative tyrosine-protein kinase EpsB (751 aa).

Topologically, residues 1–31 (MTQNLSQPPAVNAPESELDLVRYLDVLVANR) are cytoplasmic. A helical transmembrane segment spans residues 32 to 52 (WLIAGIAAVVMLLGATYAFLA). The Periplasmic portion of the chain corresponds to 53–444 (RPVYEADVLV…VPEEPVKPKK (392 aa)). A helical transmembrane segment spans residues 445 to 465 (LTVTALAGVLGVVLGVVAAFV). The Cytoplasmic segment spans residues 466-751 (RNTLFGGITE…PSAEAEAESA (286 aa)).

Belongs to the etk/wzc family.

It localises to the cell inner membrane. The enzyme catalyses L-tyrosyl-[protein] + ATP = O-phospho-L-tyrosyl-[protein] + ADP + H(+). Probably involved in polymerization and/or export of exopolysaccharide EPS I which functions as a virulence factor. May be involved in an ATP-dependent process in the pathway for EPS I production, possibly export of the trimeric repeat units across the inner membrane or their polymerization. The protein is Putative tyrosine-protein kinase EpsB (epsB) of Ralstonia nicotianae (strain ATCC BAA-1114 / GMI1000) (Ralstonia solanacearum).